Reading from the N-terminus, the 882-residue chain is MTELSPKYNPAEVEAGRYQKWLDADVFKPSGDQKAKPYSIVIPPPNVTGKLHLGHAWDTTLQDIIIRQKRMQGFDTLWLPGMDHAGIATQAKVEERLRGQGITRYDLGREKFLDKVWEWKDEYATTIKEQWGKMGLSVDYSRERFTLDEGLSKAVRKVFVDLYKKGWIYRGEFIINWDPAARTALSDIEVIHKDVEGAFYHMNYMLEDGSRALQVATTRPETMFGDVAVAVNPEDPRYKDLIGKHVILPIVNKLIPIVGDEHADPEFGTGVVKITPAHDPNDFEVGQRHNLPQVNVMNDDGTMNELAGDFAGMDRFEARQATVAKLEELGALVNIEKRVHSVGHSERSGAVVEPRLSTQWFVKMDELAKQAMDNQETDDRVDFYPPRFNDTFLQWMENVHDWVISRQLWWGHQIPAWYNAEGEIYVGEEAPEGDGWTQDEDVLDTWFSSALWPFSTMGWPDTDVEDFKRYFPTSTLVTGYDIIFFWVSRMIFQTLEFTGRQPFQNVLIHGLIRDEEGRKMSKSLGNGIDPMDVIEKYGADSLRWFLSNGSAPGQDVRFSYEKMDASWNFINKIWNISRYILMNNEGLTLEEAESNVAKVAASEAGNVTDQWILHNLNETIAKVTENFDKFEFGVAGHILYNFIWEEFANWYVELTKEVLYSDNEAEKVITRSVLLYTLDKILRLLHPIMPFVTEEIYAQYAQGSIVTAAYPTVTPAFENEAAHKGVESLKDLIRAVRNARAEVNVAPSKPITILVKTADSELEDFFTSNVNYIKRFTNPEKLEISSAIAAPELAMTSIITGAEIYLPLADLLNVEEELARLDKELAKWQKELDMVGKKLGNERFVANAKPEVVQKEKDKQADYQAKYDATQERIAEMQKLVK.

Positions 45–55 (PNVTGKLHLGH) match the 'HIGH' region motif. A 'KMSKS' region motif is present at residues 519 to 523 (KMSKS). An ATP-binding site is contributed by Lys-522. Residues 808–882 (LADLLNVEEE…RIAEMQKLVK (75 aa)) are a coiled coil.

The protein belongs to the class-I aminoacyl-tRNA synthetase family. ValS type 1 subfamily. In terms of assembly, monomer.

The protein resides in the cytoplasm. It carries out the reaction tRNA(Val) + L-valine + ATP = L-valyl-tRNA(Val) + AMP + diphosphate. Its function is as follows. Catalyzes the attachment of valine to tRNA(Val). As ValRS can inadvertently accommodate and process structurally similar amino acids such as threonine, to avoid such errors, it has a 'posttransfer' editing activity that hydrolyzes mischarged Thr-tRNA(Val) in a tRNA-dependent manner. In Streptococcus pyogenes serotype M3 (strain ATCC BAA-595 / MGAS315), this protein is Valine--tRNA ligase.